Here is a 228-residue protein sequence, read N- to C-terminus: 7-cyano-7-deazaguanine synthase (228 aa).

9-19 (LSGGPDSTTVL) contributes to the ATP binding site. Residues cysteine 193, cysteine 203, cysteine 206, and cysteine 209 each coordinate Zn(2+).

It belongs to the QueC family. It depends on Zn(2+) as a cofactor.

The enzyme catalyses 7-carboxy-7-deazaguanine + NH4(+) + ATP = 7-cyano-7-deazaguanine + ADP + phosphate + H2O + H(+). It functions in the pathway purine metabolism; 7-cyano-7-deazaguanine biosynthesis. Functionally, catalyzes the ATP-dependent conversion of 7-carboxy-7-deazaguanine (CDG) to 7-cyano-7-deazaguanine (preQ(0)). The polypeptide is 7-cyano-7-deazaguanine synthase (Rickettsia conorii (strain ATCC VR-613 / Malish 7)).